Consider the following 832-residue polypeptide: Golgin subfamily A member 6-like protein 24 (832 aa).

Disordered stretches follow at residues 1-107 (MWPQ…QEAL), 303-333 (QEQE…MRRQ), 351-431 (MHEQ…EMWR), 508-652 (QEEM…EQEE), and 664-832 (QEEM…MQEH). Basic residues predominate over residues 13-27 (LPTHPHLPTHPHLPT). The span at 37–58 (MSKETRQSKLAEAKEQLTDHHP) shows a compositional bias: basic and acidic residues. Polar residues-rich tracts occupy residues 59–69 (QTNPSVGTAAS) and 77–89 (NNGT…TSGG). The span at 92–107 (SPEDEQKASHQHQEAL) shows a compositional bias: basic and acidic residues. The stretch at 163–828 (LEQALSAVAT…EVRLRQQEEK (666 aa)) forms a coiled coil. Composition is skewed to basic and acidic residues over residues 664 to 684 (QEEM…KMWE) and 692 to 832 (QEEK…MQEH).

This sequence belongs to the GOLGA6 family.

This chain is Golgin subfamily A member 6-like protein 24, found in Homo sapiens (Human).